The chain runs to 154 residues: Ecotin-like protein 2 (154 aa).

Belongs to the protease inhibitor I11 (ecotin) family.

This Trypanosoma brucei brucei (strain 927/4 GUTat10.1) protein is Ecotin-like protein 2.